Here is a 238-residue protein sequence, read N- to C-terminus: Orotidine 5'-phosphate decarboxylase (238 aa).

Substrate-binding positions include D10, K32, 59–68, T122, R184, Q193, G213, and R214; that span reads DLKLHDIPNT. K61 functions as the Proton donor in the catalytic mechanism.

It belongs to the OMP decarboxylase family. Type 1 subfamily. In terms of assembly, homodimer.

It carries out the reaction orotidine 5'-phosphate + H(+) = UMP + CO2. Its pathway is pyrimidine metabolism; UMP biosynthesis via de novo pathway; UMP from orotate: step 2/2. Catalyzes the decarboxylation of orotidine 5'-monophosphate (OMP) to uridine 5'-monophosphate (UMP). The chain is Orotidine 5'-phosphate decarboxylase from Bacillus anthracis (strain A0248).